A 115-amino-acid polypeptide reads, in one-letter code: uncharacterized protein (115 aa).

The HTH arsR-type domain occupies 1 to 91; the sequence is MTEYNANSIR…SELEGFKNVS (91 aa). The H-T-H motif DNA-binding region spans 30-53; sequence ASLISHTLLLSYATVLRHLRILND.

Functionally, essential for virus function. This is an uncharacterized protein from Saccharolobus solfataricus (Sulfolobus solfataricus).